We begin with the raw amino-acid sequence, 371 residues long: 4-hydroxy-3-methylbut-2-en-1-yl diphosphate synthase (flavodoxin) (371 aa).

[4Fe-4S] cluster contacts are provided by Cys-270, Cys-273, Cys-305, and Glu-312.

The protein belongs to the IspG family. It depends on [4Fe-4S] cluster as a cofactor.

The enzyme catalyses (2E)-4-hydroxy-3-methylbut-2-enyl diphosphate + oxidized [flavodoxin] + H2O + 2 H(+) = 2-C-methyl-D-erythritol 2,4-cyclic diphosphate + reduced [flavodoxin]. The protein operates within isoprenoid biosynthesis; isopentenyl diphosphate biosynthesis via DXP pathway; isopentenyl diphosphate from 1-deoxy-D-xylulose 5-phosphate: step 5/6. Its function is as follows. Converts 2C-methyl-D-erythritol 2,4-cyclodiphosphate (ME-2,4cPP) into 1-hydroxy-2-methyl-2-(E)-butenyl 4-diphosphate. This is 4-hydroxy-3-methylbut-2-en-1-yl diphosphate synthase (flavodoxin) from Shewanella halifaxensis (strain HAW-EB4).